The chain runs to 475 residues: Aspartyl/glutamyl-tRNA(Asn/Gln) amidotransferase subunit B (475 aa).

This sequence belongs to the GatB/GatE family. GatB subfamily. As to quaternary structure, heterotrimer of A, B and C subunits.

The catalysed reaction is L-glutamyl-tRNA(Gln) + L-glutamine + ATP + H2O = L-glutaminyl-tRNA(Gln) + L-glutamate + ADP + phosphate + H(+). It carries out the reaction L-aspartyl-tRNA(Asn) + L-glutamine + ATP + H2O = L-asparaginyl-tRNA(Asn) + L-glutamate + ADP + phosphate + 2 H(+). Functionally, allows the formation of correctly charged Asn-tRNA(Asn) or Gln-tRNA(Gln) through the transamidation of misacylated Asp-tRNA(Asn) or Glu-tRNA(Gln) in organisms which lack either or both of asparaginyl-tRNA or glutaminyl-tRNA synthetases. The reaction takes place in the presence of glutamine and ATP through an activated phospho-Asp-tRNA(Asn) or phospho-Glu-tRNA(Gln). In Bacillus mycoides (strain KBAB4) (Bacillus weihenstephanensis), this protein is Aspartyl/glutamyl-tRNA(Asn/Gln) amidotransferase subunit B.